The chain runs to 506 residues: Anaerobic nitric oxide reductase transcription regulator NorR (506 aa).

Asp57 is modified (4-aspartylphosphate). Positions 187–416 constitute a Sigma-54 factor interaction domain; it reads MIGLSPAMTQ…LEHAIHRAVV (230 aa). Residues 215–222 and 278–287 contribute to the ATP site; these read GETGTGKE and ADNGTLFLDE. Residues 481 to 500 constitute a DNA-binding region (H-T-H motif); the sequence is WAASARALETDVANLHRLAK.

It participates in nitrogen metabolism; nitric oxide reduction. Its function is as follows. Required for the expression of anaerobic nitric oxide (NO) reductase, acts as a transcriptional activator for at least the norVW operon. Activation also requires sigma-54. This Salmonella paratyphi C (strain RKS4594) protein is Anaerobic nitric oxide reductase transcription regulator NorR.